Consider the following 304-residue polypeptide: N-acetylmuramic acid 6-phosphate etherase (304 aa).

Residues 60–221 (GVSVLRHGGR…STAVMVRLGY (162 aa)) enclose the SIS domain. Catalysis depends on Glu-88, which acts as the Proton donor. Glu-119 is a catalytic residue.

Belongs to the GCKR-like family. MurNAc-6-P etherase subfamily. Homodimer.

The catalysed reaction is N-acetyl-D-muramate 6-phosphate + H2O = N-acetyl-D-glucosamine 6-phosphate + (R)-lactate. Its pathway is amino-sugar metabolism; N-acetylmuramate degradation. Functionally, specifically catalyzes the cleavage of the D-lactyl ether substituent of MurNAc 6-phosphate, producing GlcNAc 6-phosphate and D-lactate. The chain is N-acetylmuramic acid 6-phosphate etherase from Thermobifida fusca (strain YX).